Consider the following 76-residue polypeptide: uncharacterized protein (76 aa).

It to M.jannaschii MJ0857 N-terminal region.

This is an uncharacterized protein from Methanocaldococcus jannaschii (strain ATCC 43067 / DSM 2661 / JAL-1 / JCM 10045 / NBRC 100440) (Methanococcus jannaschii).